The sequence spans 359 residues: Type-1 angiotensin II receptor (359 aa).

Over 1 to 25 the chain is Extracellular; the sequence is MILNSSTEDGIKRIQDDCPKAGRHN. N-linked (GlcNAc...) (complex) asparagine glycosylation occurs at Asn4. Angiotensin II is bound by residues Gln15 and Asp17. 2 cysteine pairs are disulfide-bonded: Cys18–Cys274 and Cys101–Cys180. The helical transmembrane segment at 26 to 55 threads the bilayer; the sequence is YIFVMIPTLYSIIFVVGIFGNSLVVIVIYF. Over 56–61 the chain is Cytoplasmic; the sequence is YMKLKT. A helical membrane pass occupies residues 62–89; that stretch reads VASVFLLNLALADLCFLLTLPLWAVYTA. At 90-98 the chain is on the extracellular side; it reads MEYRWPFGN. The helical transmembrane segment at 99–125 threads the bilayer; sequence YLCKIASASVSFNLYASVFLLTCLSID. Over 126–141 the chain is Cytoplasmic; sequence RYLAIVHPMKSRLRRT. A helical membrane pass occupies residues 142-165; sequence MLVAKVTCIIIWLLAGLASLPAII. The Extracellular portion of the chain corresponds to 166–190; it reads HRNVFFIENTNITVCAFHYESQNST. An angiotensin II-binding site is contributed by Arg167. Asn176 carries an N-linked (GlcNAc...) asparagine glycan. The angiotensin II site is built by Phe182, His183, and Tyr184. Asn188 carries an N-linked (GlcNAc...) asparagine glycan. The chain crosses the membrane as a helical span at residues 191–216; sequence LPIGLGLTKNILGFLFPFLIILTSYT. Lys199 lines the angiotensin II pocket. Topologically, residues 217–239 are cytoplasmic; the sequence is LIWKALKKAYEIQKNKPRNDDIF. A helical membrane pass occupies residues 240–268; it reads KIIMAIVLFFFFSWIPHQIFTFLDVLIQL. Topologically, residues 269-278 are extracellular; sequence GIIRDCRIAD. The helical transmembrane segment at 279 to 304 threads the bilayer; it reads IVDTAMPITICIAYFNNCLNPLFYGF. Over 305-359 the chain is Cytoplasmic; that stretch reads LGKKFKRYFLQLLKYIPPKAKSHSNLSTKMSTLSYRPSDNVSSSTKKPAPCFEVE. Residues 335–350 are compositionally biased toward polar residues; that stretch reads STLSYRPSDNVSSSTK. The disordered stretch occupies residues 335–359; that stretch reads STLSYRPSDNVSSSTKKPAPCFEVE. Cys355 carries the S-palmitoyl cysteine lipid modification.

It belongs to the G-protein coupled receptor 1 family. Interacts with MAS1. Interacts with ARRB1. Interacts with FLNA (via filamin repeat 21); increases PKA-mediated phosphorylation of FLNA. In terms of processing, C-terminal Ser or Thr residues may be phosphorylated. As to expression, liver, lung, adrenal and adrenocortical adenomas.

The protein resides in the cell membrane. Its activity is regulated as follows. Strongly inhibited by anti-hypertensive drugs losartan, candesartan, valsartan, irbesartan, telmisartan, eprosartan, olmesartan and azilsartan, most of which share a common biphenyl-tetrazole scaffold. Receptor for angiotensin II, a vasoconstricting peptide, which acts as a key regulator of blood pressure and sodium retention by the kidney. The activated receptor in turn couples to G-alpha proteins G(q) (GNAQ, GNA11, GNA14 or GNA15) and thus activates phospholipase C and increases the cytosolic Ca(2+) concentrations, which in turn triggers cellular responses such as stimulation of protein kinase C. Functionally, (Microbial infection) During SARS coronavirus-2/SARS-CoV-2 infection, it is able to recognize and internalize the complex formed by secreted ACE2 and SARS-CoV-2 spike protein through DNM2/dynamin 2-dependent endocytosis. This is Type-1 angiotensin II receptor from Homo sapiens (Human).